The sequence spans 253 residues: Phosphate import ATP-binding protein PstB (253 aa).

The ABC transporter domain occupies 7-249; that stretch reads ASAKNLNLWY…PQSSKTKRYI (243 aa). 39-46 provides a ligand contact to ATP; that stretch reads GPSGCGKS.

This sequence belongs to the ABC transporter superfamily. Phosphate importer (TC 3.A.1.7) family. In terms of assembly, the complex is composed of two ATP-binding proteins (PstB), two transmembrane proteins (PstC and PstA) and a solute-binding protein (PstS).

It localises to the cell inner membrane. It carries out the reaction phosphate(out) + ATP + H2O = ADP + 2 phosphate(in) + H(+). Functionally, part of the ABC transporter complex PstSACB involved in phosphate import. Responsible for energy coupling to the transport system. This Ehrlichia ruminantium (strain Gardel) protein is Phosphate import ATP-binding protein PstB.